The sequence spans 249 residues: Enolase-phosphatase E1 (249 aa).

Residues Asp15 and Glu17 each contribute to the Mg(2+) site. Residues 146-147 (SS) and Lys180 each bind substrate. Asp205 contributes to the Mg(2+) binding site.

It belongs to the HAD-like hydrolase superfamily. MasA/MtnC family. In terms of assembly, monomer. The cofactor is Mg(2+).

Its subcellular location is the cytoplasm. The protein resides in the nucleus. The catalysed reaction is 5-methylsulfanyl-2,3-dioxopentyl phosphate + H2O = 1,2-dihydroxy-5-(methylsulfanyl)pent-1-en-3-one + phosphate. It functions in the pathway amino-acid biosynthesis; L-methionine biosynthesis via salvage pathway; L-methionine from S-methyl-5-thio-alpha-D-ribose 1-phosphate: step 3/6. The protein operates within amino-acid biosynthesis; L-methionine biosynthesis via salvage pathway; L-methionine from S-methyl-5-thio-alpha-D-ribose 1-phosphate: step 4/6. Functionally, bifunctional enzyme that catalyzes the enolization of 2,3-diketo-5-methylthiopentyl-1-phosphate (DK-MTP-1-P) into the intermediate 2-hydroxy-3-keto-5-methylthiopentenyl-1-phosphate (HK-MTPenyl-1-P), which is then dephosphorylated to form the acireductone 1,2-dihydroxy-3-keto-5-methylthiopentene (DHK-MTPene). This Caenorhabditis briggsae protein is Enolase-phosphatase E1.